Consider the following 264-residue polypeptide: Hydroxyethylthiazole kinase (264 aa).

Residue M52 coordinates substrate. ATP-binding residues include R127 and T173. G200 lines the substrate pocket.

It belongs to the Thz kinase family. Requires Mg(2+) as cofactor.

The catalysed reaction is 5-(2-hydroxyethyl)-4-methylthiazole + ATP = 4-methyl-5-(2-phosphooxyethyl)-thiazole + ADP + H(+). It participates in cofactor biosynthesis; thiamine diphosphate biosynthesis; 4-methyl-5-(2-phosphoethyl)-thiazole from 5-(2-hydroxyethyl)-4-methylthiazole: step 1/1. In terms of biological role, catalyzes the phosphorylation of the hydroxyl group of 4-methyl-5-beta-hydroxyethylthiazole (THZ). The polypeptide is Hydroxyethylthiazole kinase (Pectobacterium carotovorum subsp. carotovorum (strain PC1)).